The sequence spans 280 residues: DegV domain-containing protein Mb2440c (280 aa).

Residues 3-274 (VVVVTDTSCR…AGAVGVCVDV (272 aa)) form the DegV domain. A hexadecanoate-binding site is contributed by serine 89.

May bind long-chain fatty acids, such as palmitate, and may play a role in lipid transport or fatty acid metabolism. The protein is DegV domain-containing protein Mb2440c of Mycobacterium bovis (strain ATCC BAA-935 / AF2122/97).